The primary structure comprises 555 residues: Myo-inositol transporter 2 (555 aa).

Over 1 to 61 (MSSTLDTITP…NLVRAENEDK (61 aa)) the chain is Cytoplasmic. The helical transmembrane segment at 62-82 (VTPYFMFLISVAAIAGFLFGY) threads the bilayer. The Extracellular portion of the chain corresponds to 83–108 (DTGIVGAALPMVGTSLGHTLSATESE). The chain crosses the membrane as a helical span at residues 109–129 (IITAGTTIGAIFGASILGTMA). The Cytoplasmic portion of the chain corresponds to 130–142 (DKLGRKWAMIISD). The chain crosses the membrane as a helical span at residues 143–163 (FAFTAGAIIIAASYSVPQIIV). Residues 164-165 (GR) are Extracellular-facing. A helical membrane pass occupies residues 166–186 (LVLGVGVGGAAVIAPLYIAEL). Residues 187 to 200 (APTAVRGRCVGANA) lie on the Cytoplasmic side of the membrane. The chain crosses the membrane as a helical span at residues 201–221 (FCIPFGQVVASAIGAGFQAGV). The Extracellular segment spans residues 222–228 (PYHIGWR). Residues 229-249 (VLFGLGVVPSVVQLCLMHFLP) traverse the membrane as a helical segment. Residues 250–328 (ESPRVLVLRG…AIISVSGVQA (79 aa)) are Cytoplasmic-facing. The chain crosses the membrane as a helical span at residues 329 to 349 (FGQLTGFNTLLYYSGTIFGLL). The Extracellular segment spans residues 350-355 (GLKNGA). Residues 356–376 (AAGLIPSCLNALFVFIGMSIV) traverse the membrane as a helical segment. Residues 377-385 (DKVGRRKLM) are Cytoplasmic-facing. The helical transmembrane segment at 386 to 406 (ITFIPGMMIAFTWTIISFHFL) threads the bilayer. Residues 407–427 (TKPTGGLLLKDYQYSTPLVGS) are Extracellular-facing. Residues 428–448 (VLGSIVLFVIPFGLTYSHIIW) traverse the membrane as a helical segment. The Cytoplasmic portion of the chain corresponds to 449 to 461 (YQSEFLPLEIRAA). Residues 462 to 482 (GSAISTTACWLANLVVSVAYL) traverse the membrane as a helical segment. Residues 483–487 (TQLEK) are Extracellular-facing. Residues 488-508 (LGATGTYGLYLGFITIGYIFV) traverse the membrane as a helical segment. The Cytoplasmic portion of the chain corresponds to 509–555 (YFCYPETKGLSIDETAEIFIDGFGIEKAHQMLREKRAFAAELYAGRA).

Belongs to the major facilitator superfamily. Sugar transporter (TC 2.A.1.1) family.

The protein localises to the cell membrane. It carries out the reaction myo-inositol(out) + H(+)(out) = myo-inositol(in) + H(+)(in). Functionally, transporter for myo-inositol. The polypeptide is Myo-inositol transporter 2 (Cryptococcus neoformans var. grubii serotype A (strain H99 / ATCC 208821 / CBS 10515 / FGSC 9487) (Filobasidiella neoformans var. grubii)).